Reading from the N-terminus, the 207-residue chain is LexA repressor (207 aa).

Positions 29-49 form a DNA-binding region, H-T-H motif; the sequence is VREICSAVDLSSTSTVHGHLA. Active-site for autocatalytic cleavage activity residues include Ser-128 and Lys-166.

Belongs to the peptidase S24 family. In terms of assembly, homodimer.

The catalysed reaction is Hydrolysis of Ala-|-Gly bond in repressor LexA.. Represses a number of genes involved in the response to DNA damage (SOS response), including recA and lexA. In the presence of single-stranded DNA, RecA interacts with LexA causing an autocatalytic cleavage which disrupts the DNA-binding part of LexA, leading to derepression of the SOS regulon and eventually DNA repair. The protein is LexA repressor of Lactobacillus gasseri (strain ATCC 33323 / DSM 20243 / BCRC 14619 / CIP 102991 / JCM 1131 / KCTC 3163 / NCIMB 11718 / NCTC 13722 / AM63).